The sequence spans 186 residues: ATP synthase subunit b' (186 aa).

The helical transmembrane segment at 39–59 (IFWLLLALGAIYWLLKNIAIP) threads the bilayer.

It belongs to the ATPase B chain family. As to quaternary structure, F-type ATPases have 2 components, F(1) - the catalytic core - and F(0) - the membrane proton channel. F(1) has five subunits: alpha(3), beta(3), gamma(1), delta(1), epsilon(1). F(0) has four main subunits: a(1), b(1), b'(1) and c(10-14). The alpha and beta chains form an alternating ring which encloses part of the gamma chain. F(1) is attached to F(0) by a central stalk formed by the gamma and epsilon chains, while a peripheral stalk is formed by the delta, b and b' chains.

The protein resides in the cellular chromatophore membrane. Its function is as follows. F(1)F(0) ATP synthase produces ATP from ADP in the presence of a proton or sodium gradient. F-type ATPases consist of two structural domains, F(1) containing the extramembraneous catalytic core and F(0) containing the membrane proton channel, linked together by a central stalk and a peripheral stalk. During catalysis, ATP synthesis in the catalytic domain of F(1) is coupled via a rotary mechanism of the central stalk subunits to proton translocation. Component of the F(0) channel, it forms part of the peripheral stalk, linking F(1) to F(0). The b'-subunit is a diverged and duplicated form of b found in plants and photosynthetic bacteria. This is ATP synthase subunit b' from Rhodobacter capsulatus (Rhodopseudomonas capsulata).